The following is a 299-amino-acid chain: Serpentine receptor class gamma-30 (299 aa).

Helical transmembrane passes span 18–38 (GIQF…IKVL), 59–79 (ILSV…NYIP), 98–118 (ILFI…FMVV), 137–157 (IIPH…WTAF), 189–209 (IISS…MLCI), 223–243 (LTAS…MNIY), and 260–280 (ALTA…MLCL).

It belongs to the nematode receptor-like protein srg family.

The protein localises to the membrane. This chain is Serpentine receptor class gamma-30 (srg-30), found in Caenorhabditis elegans.